The following is a 212-amino-acid chain: Thymidylate kinase (212 aa).

Residue 11-18 (GPEGAGKT) participates in ATP binding.

Belongs to the thymidylate kinase family.

It carries out the reaction dTMP + ATP = dTDP + ADP. Functionally, phosphorylation of dTMP to form dTDP in both de novo and salvage pathways of dTTP synthesis. The protein is Thymidylate kinase of Streptococcus pneumoniae (strain Hungary19A-6).